Consider the following 405-residue polypeptide: Metallophosphoesterase 1 (405 aa).

A helical membrane pass occupies residues 31-51 (IFGSILLVFFFCEFLVYYLVI). 6 residues coordinate a divalent metal cation: D78, D120, N158, H261, H315, and H317. The helical transmembrane segment at 369 to 389 (IIYIYCTASVLLTGYVLACLW) threads the bilayer.

The protein belongs to the metallophosphoesterase superfamily. MPPE1 family. Mn(2+) serves as cofactor.

Its subcellular location is the endoplasmic reticulum-Golgi intermediate compartment membrane. Functionally, metallophosphoesterase that catalyzes the removal of a side-chain ethanolamine-phosphate (EtNP) from the second mannose of the GPI-anchor protein intermediate. Participates in the glycan remodeling steps of GPI-anchor maturation to allow an efficient transport of GPI-anchor proteins from the endoplasmic reticulum to the Golgi. The protein is Metallophosphoesterase 1 of Xenopus laevis (African clawed frog).